The sequence spans 103 residues: Co-chaperonin GroES (103 aa).

This sequence belongs to the GroES chaperonin family. As to quaternary structure, heptamer of 7 subunits arranged in a ring. Interacts with the chaperonin GroEL.

It is found in the cytoplasm. Functionally, together with the chaperonin GroEL, plays an essential role in assisting protein folding. The GroEL-GroES system forms a nano-cage that allows encapsulation of the non-native substrate proteins and provides a physical environment optimized to promote and accelerate protein folding. GroES binds to the apical surface of the GroEL ring, thereby capping the opening of the GroEL channel. The chain is Co-chaperonin GroES from Nostoc sp. (strain PCC 7120 / SAG 25.82 / UTEX 2576).